A 339-amino-acid chain; its full sequence is Glycerol-3-phosphate dehydrogenase [NAD(P)+] (339 aa).

NADPH contacts are provided by Ser-15, Tyr-16, His-36, and Lys-110. Sn-glycerol 3-phosphate-binding residues include Lys-110, Gly-139, and Thr-141. NADPH is bound at residue Ala-143. 5 residues coordinate sn-glycerol 3-phosphate: Lys-195, Asp-248, Ser-258, Arg-259, and Asn-260. Catalysis depends on Lys-195, which acts as the Proton acceptor. Arg-259 is an NADPH binding site. NADPH is bound by residues Val-283 and Glu-285.

It belongs to the NAD-dependent glycerol-3-phosphate dehydrogenase family.

The protein resides in the cytoplasm. The enzyme catalyses sn-glycerol 3-phosphate + NAD(+) = dihydroxyacetone phosphate + NADH + H(+). The catalysed reaction is sn-glycerol 3-phosphate + NADP(+) = dihydroxyacetone phosphate + NADPH + H(+). It functions in the pathway membrane lipid metabolism; glycerophospholipid metabolism. Functionally, catalyzes the reduction of the glycolytic intermediate dihydroxyacetone phosphate (DHAP) to sn-glycerol 3-phosphate (G3P), the key precursor for phospholipid synthesis. This Cronobacter sakazakii (strain ATCC BAA-894) (Enterobacter sakazakii) protein is Glycerol-3-phosphate dehydrogenase [NAD(P)+].